The chain runs to 213 residues: Na(+)-translocating NADH-quinone reductase subunit D (213 aa).

The next 6 helical transmembrane spans lie at 21–41, 42–62, 69–86, 101–121, 131–151, and 183–203; these read PLIAILGICSALAVTTTVNTA, ITMGLAVSFVTGCSSFFVSLL, SVRMITQLIIISLFVIVI, LSVFVGLIITNCIVMGRAESL, FLDGLASGLGYGWVLVTVSIV, and FGLMVLAPSAFFLLGIMIWGV.

This sequence belongs to the NqrDE/RnfAE family. Composed of six subunits; NqrA, NqrB, NqrC, NqrD, NqrE and NqrF.

The protein localises to the cell inner membrane. It carries out the reaction a ubiquinone + n Na(+)(in) + NADH + H(+) = a ubiquinol + n Na(+)(out) + NAD(+). NQR complex catalyzes the reduction of ubiquinone-1 to ubiquinol by two successive reactions, coupled with the transport of Na(+) ions from the cytoplasm to the periplasm. NqrA to NqrE are probably involved in the second step, the conversion of ubisemiquinone to ubiquinol. This Chlamydia caviae (strain ATCC VR-813 / DSM 19441 / 03DC25 / GPIC) (Chlamydophila caviae) protein is Na(+)-translocating NADH-quinone reductase subunit D.